The primary structure comprises 149 residues: Large ribosomal subunit protein bL9 (149 aa).

This sequence belongs to the bacterial ribosomal protein bL9 family.

Its function is as follows. Binds to the 23S rRNA. The protein is Large ribosomal subunit protein bL9 of Bacillus velezensis (strain DSM 23117 / BGSC 10A6 / LMG 26770 / FZB42) (Bacillus amyloliquefaciens subsp. plantarum).